Reading from the N-terminus, the 367-residue chain is Cobalt-precorrin-5B C(1)-methyltransferase (367 aa).

It belongs to the CbiD family.

The catalysed reaction is Co-precorrin-5B + S-adenosyl-L-methionine = Co-precorrin-6A + S-adenosyl-L-homocysteine. The protein operates within cofactor biosynthesis; adenosylcobalamin biosynthesis; cob(II)yrinate a,c-diamide from sirohydrochlorin (anaerobic route): step 6/10. Catalyzes the methylation of C-1 in cobalt-precorrin-5B to form cobalt-precorrin-6A. The protein is Cobalt-precorrin-5B C(1)-methyltransferase of Leptospira interrogans serogroup Icterohaemorrhagiae serovar Lai (strain 56601).